The primary structure comprises 282 residues: 4-diphosphocytidyl-2-C-methyl-D-erythritol kinase (282 aa).

K12 is a catalytic residue. P95–S105 is an ATP binding site. D137 is a catalytic residue.

The protein belongs to the GHMP kinase family. IspE subfamily.

The catalysed reaction is 4-CDP-2-C-methyl-D-erythritol + ATP = 4-CDP-2-C-methyl-D-erythritol 2-phosphate + ADP + H(+). The protein operates within isoprenoid biosynthesis; isopentenyl diphosphate biosynthesis via DXP pathway; isopentenyl diphosphate from 1-deoxy-D-xylulose 5-phosphate: step 3/6. In terms of biological role, catalyzes the phosphorylation of the position 2 hydroxy group of 4-diphosphocytidyl-2C-methyl-D-erythritol. This Pseudomonas aeruginosa (strain LESB58) protein is 4-diphosphocytidyl-2-C-methyl-D-erythritol kinase.